Consider the following 232-residue polypeptide: RNA chaperone ProQ (232 aa).

A disordered region spans residues 105–182 (EAKARVQAQR…REEQHTPVSD (78 aa)). Basic and acidic residues-rich tracts occupy residues 117 to 138 (QQAK…PPRE) and 147 to 177 (RRKE…EEQH).

The protein belongs to the ProQ family.

It localises to the cytoplasm. In terms of biological role, RNA chaperone with significant RNA binding, RNA strand exchange and RNA duplexing activities. May regulate ProP activity through an RNA-based, post-transcriptional mechanism. This is RNA chaperone ProQ from Escherichia coli O139:H28 (strain E24377A / ETEC).